The following is a 117-amino-acid chain: Basic phospholipase A2 pseudexin B chain (117 aa).

7 cysteine pairs are disulfide-bonded: cysteine 11/cysteine 71, cysteine 27/cysteine 117, cysteine 29/cysteine 45, cysteine 44/cysteine 98, cysteine 51/cysteine 91, cysteine 60/cysteine 84, and cysteine 78/cysteine 89. 3 residues coordinate Ca(2+): tyrosine 28, glycine 30, and glycine 32. Residue histidine 48 is part of the active site. Residue aspartate 49 coordinates Ca(2+). Residue aspartate 92 is part of the active site.

This sequence belongs to the phospholipase A2 family. Group I subfamily. D49 sub-subfamily. It depends on Ca(2+) as a cofactor. As to expression, expressed by the venom gland.

The protein resides in the secreted. The enzyme catalyses a 1,2-diacyl-sn-glycero-3-phosphocholine + H2O = a 1-acyl-sn-glycero-3-phosphocholine + a fatty acid + H(+). Functionally, PLA2 catalyzes the calcium-dependent hydrolysis of the 2-acyl groups in 3-sn-phosphoglycerides. The polypeptide is Basic phospholipase A2 pseudexin B chain (Pseudechis porphyriacus (Red-bellied black snake)).